Reading from the N-terminus, the 573-residue chain is Urease subunit alpha 1 (573 aa).

Residues 136 to 573 (GGIDTHVHFI…LPLAQRYFLF (438 aa)) form the Urease domain. Residues His141, His143, and Lys224 each coordinate Ni(2+). N6-carboxylysine is present on Lys224. Residue His226 coordinates substrate. 2 residues coordinate Ni(2+): His253 and His279. Residue His327 is the Proton donor of the active site. Position 367 (Asp367) interacts with Ni(2+).

This sequence belongs to the metallo-dependent hydrolases superfamily. Urease alpha subunit family. As to quaternary structure, may form a heterohexamer of 3 UreC (alpha) and 3 UreAB (gamma/beta) subunits. May also form a heterotrimer of UreA (gamma), UreB (beta) and UreC (alpha) subunits. Three heterotrimers associate to form the active enzyme. It depends on Ni cation as a cofactor. In terms of processing, carboxylation allows a single lysine to coordinate two nickel ions.

It localises to the cytoplasm. It catalyses the reaction urea + 2 H2O + H(+) = hydrogencarbonate + 2 NH4(+). The protein operates within nitrogen metabolism; urea degradation; CO(2) and NH(3) from urea (urease route): step 1/1. This Streptomyces coelicolor (strain ATCC BAA-471 / A3(2) / M145) protein is Urease subunit alpha 1.